We begin with the raw amino-acid sequence, 467 residues long: Methylenetetrahydrofolate--tRNA-(uracil-5-)-methyltransferase TrmFO (467 aa).

Residue 11–16 (GAGLAG) participates in FAD binding.

It belongs to the MnmG family. TrmFO subfamily. FAD serves as cofactor.

Its subcellular location is the cytoplasm. It catalyses the reaction uridine(54) in tRNA + (6R)-5,10-methylene-5,6,7,8-tetrahydrofolate + NADH + H(+) = 5-methyluridine(54) in tRNA + (6S)-5,6,7,8-tetrahydrofolate + NAD(+). The catalysed reaction is uridine(54) in tRNA + (6R)-5,10-methylene-5,6,7,8-tetrahydrofolate + NADPH + H(+) = 5-methyluridine(54) in tRNA + (6S)-5,6,7,8-tetrahydrofolate + NADP(+). Catalyzes the folate-dependent formation of 5-methyl-uridine at position 54 (M-5-U54) in all tRNAs. The sequence is that of Methylenetetrahydrofolate--tRNA-(uracil-5-)-methyltransferase TrmFO from Prochlorococcus marinus (strain MIT 9303).